A 326-amino-acid chain; its full sequence is Phospho-N-acetylmuramoyl-pentapeptide-transferase (326 aa).

Helical transmembrane passes span 4–24, 49–69, 74–94, 109–129, 151–171, 179–199, 203–223, 228–248, 254–274, and 303–323; these read IWVAFTVSLAVTLIAGPLVIP, TPTMGGIIFLAGTAAGGFLLI, GLIVLLMALGYGFIGFLDDYI, KLLGQVLLAAALAYWAVFEAG, LGWWPFLAFTVLLVVFMSNAV, GLAAGVSMLVALALVPVALAA, GVAAGMAALAGGCLGFLFFNF, VFMGDTGSLALGGGLCAAAVV, LFLIIGGIYVLEALSVIIQVI, and VVITFWALTLVFAAAGLAGLY.

This sequence belongs to the glycosyltransferase 4 family. MraY subfamily. Mg(2+) serves as cofactor.

The protein localises to the cell membrane. It catalyses the reaction UDP-N-acetyl-alpha-D-muramoyl-L-alanyl-gamma-D-glutamyl-meso-2,6-diaminopimeloyl-D-alanyl-D-alanine + di-trans,octa-cis-undecaprenyl phosphate = di-trans,octa-cis-undecaprenyl diphospho-N-acetyl-alpha-D-muramoyl-L-alanyl-D-glutamyl-meso-2,6-diaminopimeloyl-D-alanyl-D-alanine + UMP. It participates in cell wall biogenesis; peptidoglycan biosynthesis. In terms of biological role, catalyzes the initial step of the lipid cycle reactions in the biosynthesis of the cell wall peptidoglycan: transfers peptidoglycan precursor phospho-MurNAc-pentapeptide from UDP-MurNAc-pentapeptide onto the lipid carrier undecaprenyl phosphate, yielding undecaprenyl-pyrophosphoryl-MurNAc-pentapeptide, known as lipid I. This Pelotomaculum thermopropionicum (strain DSM 13744 / JCM 10971 / SI) protein is Phospho-N-acetylmuramoyl-pentapeptide-transferase.